The primary structure comprises 409 residues: Argininosuccinate synthase (409 aa).

ATP is bound by residues 16-24 (AYSGGLDTS) and Ala44. L-citrulline contacts are provided by Tyr96 and Ser101. Gly126 contributes to the ATP binding site. Positions 128, 132, and 133 each coordinate L-aspartate. Asn132 contacts L-citrulline. The L-citrulline site is built by Arg136, Ser185, Ser194, Glu270, and Tyr282.

Belongs to the argininosuccinate synthase family. Type 1 subfamily. Homotetramer.

The protein localises to the cytoplasm. It catalyses the reaction L-citrulline + L-aspartate + ATP = 2-(N(omega)-L-arginino)succinate + AMP + diphosphate + H(+). It functions in the pathway amino-acid biosynthesis; L-arginine biosynthesis; L-arginine from L-ornithine and carbamoyl phosphate: step 2/3. This Shewanella piezotolerans (strain WP3 / JCM 13877) protein is Argininosuccinate synthase.